The following is a 734-amino-acid chain: MSKERGLISPSDFAQLQKYMEYSTKKVSDVLKLFEDGEMAEYLQGDAIGYEGFQQFLKIYLEVDSVPSHLSLALFQSFQTSYCSEETVKRDVVCLSDVSCYFSLLEGGRPEDKLEFTFKLYDTDRNGILDSSEVDRIIIQMMRMAEYLDWDVSELRPILQEMMKEIDYDGSGSVSLAEWLRAGATTVPLLVLLGLEMTLKDNGQHMWRPKRFPRPVYCNLCESSIGLGKQGLSCNLCKYTVHDQCAMKALPCEVSTYAKSRKDIGVQTHVWVRGGCESGRCDRCQKKIRIYHSLVGLHCVWCHLEIHDDCLPAMGHECDCGLLRDHILPPSSIYPSVLASGQERKVSKTSQKTTDDLNLSTSEALRIDPVSNTHPLLVFVNPKSGGKQGERVLWKFQYLLNPRQVFNLLKDGPEPGLRFFREVPDYRILVCGGDGTVGWILETIDKANLPFVPPVAVLPLGTGNDLARCLRWGGGYEGQNLGKILKDLEASKVVHMDRWSVEVIPQQTEEKSDPVPFQIINNYFSIGVDASIAHRFHIMREKYPEKFNSRMKNKLWYFEFATSESIFSTCKKLEESLTVEICGKPLDLSNLSLEGIAVLNIPSTHGGSNLWGDTKRPHGDIHGINQALGAMAKVITDPDILKTCVPDLSDKRLEVVGLEGAIEMGQIYTKLKNAGHRLAKCSEITFHTTKTLPMQIDGEPWMQTPCTIKITHRNQMPMLVGPPPRSSNFFGFLC.

EF-hand domains follow at residues 109-144 (RPEDKLEFTFKLYDTDRNGILDSSEVDRIIIQMMRM) and 154-189 (ELRPILQEMMKEIDYDGSGSVSLAEWLRAGATTVPL). Ca(2+) is bound by residues Asp-122, Asp-124, Asn-126, Glu-133, Asp-167, Asp-169, Ser-171, Ser-173, and Glu-178. 2 consecutive Phorbol-ester/DAG-type zinc fingers follow at residues 204–252 (QHMW…ALPC) and 268–318 (THVW…GHEC). Residues 358-505 (NLSTSEALRI…MDRWSVEVIP (148 aa)) form a necessary and sufficient for the diacylglycerol kinase activity region. The DAGKc domain occupies 371-505 (SNTHPLLVFV…MDRWSVEVIP (135 aa)). Residue Lys-483 is modified to N6-acetyllysine.

It belongs to the eukaryotic diacylglycerol kinase family. Monomer.

It localises to the cytoplasm. Its subcellular location is the cytosol. It carries out the reaction a 1,2-diacyl-sn-glycerol + ATP = a 1,2-diacyl-sn-glycero-3-phosphate + ADP + H(+). The catalysed reaction is a 1-O-alkyl-sn-glycerol + ATP = a 1-O-alkyl-sn-glycero-3-phosphate + ADP + H(+). It catalyses the reaction 1-O-alkyl-2-acyl-sn-glycerol + ATP = 1-O-alkyl-2-acyl-sn-glycero-3-phosphate + ADP + H(+). The enzyme catalyses 1,2-dihexadecanoyl-sn-glycerol + ATP = 1,2-dihexadecanoyl-sn-glycero-3-phosphate + ADP + H(+). It carries out the reaction 1-hexadecanoyl-2-(9Z-octadecenoyl)-sn-glycerol + ATP = 1-hexadecanoyl-2-(9Z-octadecenoyl)-sn-glycero-3-phosphate + ADP + H(+). The catalysed reaction is 2-(9Z-octadecenoyl)-glycerol + ATP = 2-(9Z-octadecenoyl)-sn-glycero-3-phosphate + ADP + H(+). It catalyses the reaction 1,2-di-(9Z-octadecenoyl)-sn-glycerol + ATP = 1,2-di-(9Z-octadecenoyl)-sn-glycero-3-phosphate + ADP + H(+). The enzyme catalyses 1-octadecanoyl-2-(5Z,8Z,11Z,14Z-eicosatetraenoyl)-sn-glycerol + ATP = 1-octadecanoyl-2-(5Z,8Z,11Z,14Z-eicosatetraenoyl)-sn-glycero-3-phosphate + ADP + H(+). It carries out the reaction 1,2-didecanoyl-sn-glycerol + ATP = 1,2-didecanoyl-sn-glycero-3-phosphate + ADP + H(+). The catalysed reaction is 1-O-hexadecyl-2-acetyl-sn-glycerol + ATP = 1-O-hexadecyl-2-acetyl-sn-glycero-3-phosphate + ADP + H(+). It catalyses the reaction 1-O-hexadecyl-2-(5Z,8Z,11Z,14Z-eicosatetraenoyl)-sn-glycerol + ATP = 1-O-hexadecyl-2-(5Z,8Z,11Z,14Z-eicosatetraenoyl)-sn-glycero-3-phosphate + ADP + H(+). The enzyme catalyses 1-O-hexadecyl-2-(9Z-octadecenoyl)-sn-glycerol + ATP = 1-O-hexadecyl-2-(9Z-octadecenoyl)-sn-glycero-3-phosphate + ADP + H(+). It carries out the reaction 1-O-hexadecyl-sn-glycerol + ATP = 1-O-hexadecyl-sn-glycero-3-phosphate + ADP + H(+). It functions in the pathway lipid metabolism; glycerolipid metabolism. With respect to regulation, stimulated by calcium and phosphatidylserine. Its function is as follows. Diacylglycerol kinase that converts diacylglycerol/DAG into phosphatidic acid/phosphatidate/PA and regulates the respective levels of these two bioactive lipids. Thereby, acts as a central switch between the signaling pathways activated by these second messengers with different cellular targets and opposite effects in numerous biological processes. Also plays an important role in the biosynthesis of complex lipids. Can also phosphorylate 1-alkyl-2-acylglycerol in vitro as efficiently as diacylglycerol provided it contains an arachidonoyl group. Also involved in the production of alkyl-lysophosphatidic acid, another bioactive lipid, through the phosphorylation of 1-alkyl-2-acetyl glycerol. This is Diacylglycerol kinase alpha (DGKA) from Sus scrofa (Pig).